Consider the following 208-residue polypeptide: LexA repressor (208 aa).

A DNA-binding region (H-T-H motif) is located at residues 30-50 (VREIGKSVGLSSSSTVAAYLE). Active-site for autocatalytic cleavage activity residues include serine 129 and lysine 167.

Belongs to the peptidase S24 family. In terms of assembly, homodimer.

It catalyses the reaction Hydrolysis of Ala-|-Gly bond in repressor LexA.. Its function is as follows. Represses a number of genes involved in the response to DNA damage (SOS response), including recA and lexA. In the presence of single-stranded DNA, RecA interacts with LexA causing an autocatalytic cleavage which disrupts the DNA-binding part of LexA, leading to derepression of the SOS regulon and eventually DNA repair. This Lacticaseibacillus casei (strain BL23) (Lactobacillus casei) protein is LexA repressor.